We begin with the raw amino-acid sequence, 329 residues long: MWLQKQWYKARLHPLLFLLTPLSLVFWLVTNLRRSFYALGLMPRYKADVPVIVVGNISVGGTGKTPMVVALSQWLKDEGWNPGIISRGYGAKGPFPYEVLESDSPEKAGDEPLLMRRRTGCPVVIAPKRAQAAKLMAEQHPKVDVIICDDGLQHYALKRDIELIMIDAERGTGNGWLLPAGPLREGPWRLKGADWVISNYGRHAFARHVVDVEPGNWYRVDNNEQVALKTESKFNAVAGIGYPQRFFNSLIEQGIELENSQSFADHHAFSQQDFSNLASNPILMTEKDAGKCQSFAQADWYYQTIEAKLPEVMKTNLLAELERKKNGHR.

Residue 58-65 (SVGGTGKT) participates in ATP binding.

Belongs to the LpxK family.

It carries out the reaction a lipid A disaccharide + ATP = a lipid IVA + ADP + H(+). It functions in the pathway glycolipid biosynthesis; lipid IV(A) biosynthesis; lipid IV(A) from (3R)-3-hydroxytetradecanoyl-[acyl-carrier-protein] and UDP-N-acetyl-alpha-D-glucosamine: step 6/6. In terms of biological role, transfers the gamma-phosphate of ATP to the 4'-position of a tetraacyldisaccharide 1-phosphate intermediate (termed DS-1-P) to form tetraacyldisaccharide 1,4'-bis-phosphate (lipid IVA). The polypeptide is Tetraacyldisaccharide 4'-kinase (Idiomarina loihiensis (strain ATCC BAA-735 / DSM 15497 / L2-TR)).